The primary structure comprises 505 residues: Deoxyguanosinetriphosphate triphosphohydrolase (505 aa).

The 208-residue stretch at 66–273 (RLTHSMEVQQ…MEAADDISYC (208 aa)) folds into the HD domain.

It belongs to the dGTPase family. Type 1 subfamily. In terms of assembly, homotetramer. Requires Mg(2+) as cofactor.

The enzyme catalyses dGTP + H2O = 2'-deoxyguanosine + triphosphate + H(+). In terms of biological role, dGTPase preferentially hydrolyzes dGTP over the other canonical NTPs. This chain is Deoxyguanosinetriphosphate triphosphohydrolase, found in Salmonella typhimurium (strain LT2 / SGSC1412 / ATCC 700720).